The chain runs to 238 residues: Purine nucleoside phosphorylase DeoD-type (238 aa).

H4 is an a purine D-ribonucleoside binding site. Phosphate is bound by residues G20, R24, R43, and 87 to 90 (RVGS). A purine D-ribonucleoside-binding positions include 179-181 (EME) and 203-204 (SD). The active-site Proton donor is D204.

Belongs to the PNP/UDP phosphorylase family. In terms of assembly, homohexamer; trimer of homodimers.

It catalyses the reaction a purine D-ribonucleoside + phosphate = a purine nucleobase + alpha-D-ribose 1-phosphate. The catalysed reaction is a purine 2'-deoxy-D-ribonucleoside + phosphate = a purine nucleobase + 2-deoxy-alpha-D-ribose 1-phosphate. Catalyzes the reversible phosphorolytic breakdown of the N-glycosidic bond in the beta-(deoxy)ribonucleoside molecules, with the formation of the corresponding free purine bases and pentose-1-phosphate. The polypeptide is Purine nucleoside phosphorylase DeoD-type (Mannheimia succiniciproducens (strain KCTC 0769BP / MBEL55E)).